We begin with the raw amino-acid sequence, 502 residues long: MEIKAEEISEIIRKQIKEYGTEVAVAETGTIISIGDGIARIHGLDKAMAGELLEFPGGITGMVLNLEEDNVGAAILGEFSEIKEGDSVKLTGKIVEVPVGPALIGRVVDAIGNPIDGLGPINTDTFGKVEVKAPGIVKRKSVHQPMQTGLKAIDSMVPIGRGQRELIIGDRQTGKTAVAIDTIINQKGGDVVCIYVAIGQKRSTVAQVVSKLKEHGAMDYTIVVAATASEPAPLQFIAPYTGVTMGEFFRDSGKHALIIYDDLSKQAVAYRQLSLLLRRPPGREAYPGDVFYLHSRLLERACKVSDDCGAGSLTALPVIETQAGDVSAYIPTNVISITDGQIYLESDLFYSGVRPAINVGLSVSRVGGSAQVKAMKQVAGTLRLALAQYREMAAFAQFGSDLDKATQMQLARGARLVEILKQPQYRPIPNEKQVLIIFAANNGFVDDYPIGSLGRYETELYAFFDSRKATLLGELRDKKAIDDAMKGEIIASLEEFKKEFTA.

ATP is bound at residue 169-176 (GDRQTGKT).

The protein belongs to the ATPase alpha/beta chains family. As to quaternary structure, F-type ATPases have 2 components, CF(1) - the catalytic core - and CF(0) - the membrane proton channel. CF(1) has five subunits: alpha(3), beta(3), gamma(1), delta(1), epsilon(1). CF(0) has three main subunits: a(1), b(2) and c(9-12). The alpha and beta chains form an alternating ring which encloses part of the gamma chain. CF(1) is attached to CF(0) by a central stalk formed by the gamma and epsilon chains, while a peripheral stalk is formed by the delta and b chains.

It is found in the cell inner membrane. It carries out the reaction ATP + H2O + 4 H(+)(in) = ADP + phosphate + 5 H(+)(out). Functionally, produces ATP from ADP in the presence of a proton gradient across the membrane. The alpha chain is a regulatory subunit. In Citrifermentans bemidjiense (strain ATCC BAA-1014 / DSM 16622 / JCM 12645 / Bem) (Geobacter bemidjiensis), this protein is ATP synthase subunit alpha.